Consider the following 298-residue polypeptide: Transcription factor RAX2 (298 aa).

2 HTH myb-type domains span residues 9–62 (KANV…LNYL) and 63–117 (RPNI…KKKL). 2 DNA-binding regions (H-T-H motif) span residues 38-62 (WIALPHKAGLRRCGKSCRLRWLNYL) and 90-113 (WSVIAAHLQGRTDNDIKNYWNTKL).

In terms of tissue distribution, ubiquitous, with higher levels in roots, flowers, and shoot tips. Found in all cells of the shoot tips.

The protein resides in the nucleus. Its function is as follows. Transcription activator. Positively regulates axillary meristems (AMs) formation and development, especially during inflorescence. The protein is Transcription factor RAX2 (RAX2) of Arabidopsis thaliana (Mouse-ear cress).